Reading from the N-terminus, the 219-residue chain is MVDLKTKAFDFAKNFAIALDGPAASGKGTIGLILAKKFSLQYFQSSIVYRQLAFDCINQKIDVTDMDAVIALSKALKLDSHLDLEHESIGDMASQIAVISEVRNNLNKYLINLVKTTPRIIMEGRDIGTVVVPEADLKIFITANPQIRAERRYKQLQAKGKKCILDEILRQIILRDKRDKERKAAPLLPASDALIIDTSELSAMEVVEEVTNYIKNKIA.

21 to 29 contacts ATP; sequence GPAASGKGT.

Belongs to the cytidylate kinase family. Type 1 subfamily.

Its subcellular location is the cytoplasm. The catalysed reaction is CMP + ATP = CDP + ADP. It carries out the reaction dCMP + ATP = dCDP + ADP. The chain is Cytidylate kinase from Rickettsia akari (strain Hartford).